The primary structure comprises 347 residues: NADH-ubiquinone oxidoreductase chain 2 (347 aa).

A run of 11 helical transmembrane segments spans residues proline 3–threonine 23, histidine 25–methionine 45, tyrosine 59–valine 79, isoleucine 96–proline 116, valine 122–leucine 142, isoleucine 149–glycine 169, isoleucine 178–proline 198, methionine 200–methionine 220, leucine 240–phenylalanine 260, methionine 276–leucine 296, and leucine 326–leucine 346.

Belongs to the complex I subunit 2 family. In terms of assembly, core subunit of respiratory chain NADH dehydrogenase (Complex I) which is composed of 45 different subunits. Interacts with TMEM242.

Its subcellular location is the mitochondrion inner membrane. It carries out the reaction a ubiquinone + NADH + 5 H(+)(in) = a ubiquinol + NAD(+) + 4 H(+)(out). Core subunit of the mitochondrial membrane respiratory chain NADH dehydrogenase (Complex I) which catalyzes electron transfer from NADH through the respiratory chain, using ubiquinone as an electron acceptor. Essential for the catalytic activity and assembly of complex I. The sequence is that of NADH-ubiquinone oxidoreductase chain 2 from Nyctimene albiventer (Common tube-nosed fruit bat).